The following is a 237-amino-acid chain: MIAIPAVDLRGGQCVQLVGGDYEQEQVRLADPLSVARDWSRTGFTRMHIVDLDAATGRGQNHELIRDLLRDSMVPVQVGGGVRDESRIERLIDDGAEWVVVGTRAVEDEDWREEMANRFPGRLIVAADVRERRVVTRGWAETSRLDVIDFVESLRTLPLAGVLVTAVHLEGLMQGTDLPLMEDVAEASAWPVYASGGVTSLEDMRALEHRGLAGAVLGMALYTGVLDARRLAEEYGA.

Asp8 (proton acceptor) is an active-site residue. Asp128 acts as the Proton donor in catalysis.

Belongs to the HisA/HisF family.

It is found in the cytoplasm. The catalysed reaction is 1-(5-phospho-beta-D-ribosyl)-5-[(5-phospho-beta-D-ribosylamino)methylideneamino]imidazole-4-carboxamide = 5-[(5-phospho-1-deoxy-D-ribulos-1-ylimino)methylamino]-1-(5-phospho-beta-D-ribosyl)imidazole-4-carboxamide. The protein operates within amino-acid biosynthesis; L-histidine biosynthesis; L-histidine from 5-phospho-alpha-D-ribose 1-diphosphate: step 4/9. The chain is 1-(5-phosphoribosyl)-5-[(5-phosphoribosylamino)methylideneamino] imidazole-4-carboxamide isomerase from Gemmatimonas aurantiaca (strain DSM 14586 / JCM 11422 / NBRC 100505 / T-27).